The primary structure comprises 224 residues: Ribosomal RNA small subunit methyltransferase G (224 aa).

Residues Gly-92, Leu-97, 143-144 (VE), and Arg-156 contribute to the S-adenosyl-L-methionine site.

This sequence belongs to the methyltransferase superfamily. RNA methyltransferase RsmG family.

The protein resides in the cytoplasm. The catalysed reaction is guanosine(527) in 16S rRNA + S-adenosyl-L-methionine = N(7)-methylguanosine(527) in 16S rRNA + S-adenosyl-L-homocysteine. Its function is as follows. Specifically methylates the N7 position of guanine in position 527 of 16S rRNA. This chain is Ribosomal RNA small subunit methyltransferase G, found in Albidiferax ferrireducens (strain ATCC BAA-621 / DSM 15236 / T118) (Rhodoferax ferrireducens).